We begin with the raw amino-acid sequence, 374 residues long: Putative glutamate--cysteine ligase 2 (374 aa).

The protein belongs to the glutamate--cysteine ligase type 2 family. YbdK subfamily.

It carries out the reaction L-cysteine + L-glutamate + ATP = gamma-L-glutamyl-L-cysteine + ADP + phosphate + H(+). ATP-dependent carboxylate-amine ligase which exhibits weak glutamate--cysteine ligase activity. This is Putative glutamate--cysteine ligase 2 from Leptothrix cholodnii (strain ATCC 51168 / LMG 8142 / SP-6) (Leptothrix discophora (strain SP-6)).